The primary structure comprises 398 residues: MILNIRLDHKTSDVKTMETASGRIEEIVGELEALGAVTEKVPLMTCNRVEYYLHVTGVPPEFDFNGFTVEKDEDALLHLLRLASGLESMIIGEDQILGQIKAARLQALREGTCGPLLDMVFTKAVHVGQTVRRKTKINRGSVSIGSAAVDLAESIHGDLKCKKVLVIGAGKMGTLVARALAEKHLKAIMVANRTYERAYQLACELGGDAIHFDRLNRALRDADVVISATGSPHYILTRERVMDAVPPERRSSIVMVDIANPRDIEESVRELGVRLFTIDDLRGVAEENRKRREAEAREAEGIVRAELELLLRAMKHREVEPLLAEIRGRMESLRQREAGKAIKKIENSKDPERVVEGLTRSIVDKIFHDIALKIRDAAERDDREFLRMCSELFDCDES.

Substrate contacts are provided by residues 45–48 (TCNR), Ser88, 93–95 (EDQ), and Gln99. Cys46 (nucleophile) is an active-site residue. 168-173 (GAGKMG) is an NADP(+) binding site.

Belongs to the glutamyl-tRNA reductase family. As to quaternary structure, homodimer.

It carries out the reaction (S)-4-amino-5-oxopentanoate + tRNA(Glu) + NADP(+) = L-glutamyl-tRNA(Glu) + NADPH + H(+). The protein operates within porphyrin-containing compound metabolism; protoporphyrin-IX biosynthesis; 5-aminolevulinate from L-glutamyl-tRNA(Glu): step 1/2. Functionally, catalyzes the NADPH-dependent reduction of glutamyl-tRNA(Glu) to glutamate 1-semialdehyde (GSA). This chain is Glutamyl-tRNA reductase (hemA), found in Methanothermobacter marburgensis (strain ATCC BAA-927 / DSM 2133 / JCM 14651 / NBRC 100331 / OCM 82 / Marburg) (Methanobacterium thermoautotrophicum).